The following is a 498-amino-acid chain: MASQGTKRSYEQMETDGERQNATEIRASVGRMIGGIGRFYIQMCTELKLNDYEGRLIQNSLTIERMVLSAFDERRNKYLEEHPSAGKDPKKTGGPIYKRVDGKWVRELVLYDKEEIRRIWRQANNGDDATAGLTHIMIWHSNLNDTTYQRTRALVRTGMDPRMCSLMQGSTLPRRSGAAGAAVKGVGTMVLELIRMIKRGINDRNFWRGENGRKTRIAYERMCNILKGKFQTAAQRAMMDQVRESRNPGNAEIEDLTFLARSALILRGSVAHKSCLPACVYGPAVASGYDFEKEGYSLVGVDPFKLLQTSQVYSLIRPNENPAHKSQLVWMACNSAAFEDLRVSSFIRGTRVLPRGKLSTRGVQIASNENMDAIVSSTLELRSRYWAIRTRSGGNTNQQRASAGQISTQPTFSVQRNLPFDKTTIMAAFTGNAEGRTSDMRAEIIKMMESARPEEVSFQGRGVFELSDERATNPIVPSFDMSNEGSYFFGDNAEEYDN.

A Unconventional nuclear localization signal motif is present at residues 1-18 (MASQGTKRSYEQMETDGE). Residues 1 to 21 (MASQGTKRSYEQMETDGERQN) form a disordered region. The segment covering 8–21 (RSYEQMETDGERQN) has biased composition (basic and acidic residues). The Bipartite nuclear localization signal signature appears at 198–216 (KRGINDRNFWRGENGRKTR).

Belongs to the influenza viruses nucleoprotein family. In terms of assembly, homomultimerizes to form the nucleocapsid. May bind host exportin-1/XPO1. Binds to viral genomic RNA. Protein-RNA contacts are mediated by a combination of electrostatic interactions between positively charged residues and the phosphate backbone and planar interactions between aromatic side chains and bases. In terms of processing, late in virus-infected cells, may be cleaved from a 56-kDa protein to a 53-kDa protein by a cellular caspase. This cleavage might be a marker for the onset of apoptosis in infected cells or have a specific function in virus host interaction.

The protein localises to the virion. Its subcellular location is the host nucleus. In terms of biological role, encapsidates the negative strand viral RNA, protecting it from nucleases. The encapsidated genomic RNA is termed the ribonucleoprotein (RNP) and serves as template for transcription and replication. The RNP needs to be localized in the host nucleus to start an infectious cycle, but is too large to diffuse through the nuclear pore complex. NP comprises at least 2 nuclear localization signals that are responsible for the active RNP import into the nucleus through cellular importin alpha/beta pathway. Later in the infection, nclear export of RNPs are mediated through viral proteins NEP interacting with M1 which binds nucleoproteins. It is possible that nucleoprotein binds directly host exportin-1/XPO1 and plays an active role in RNPs nuclear export. M1 interaction with RNP seems to hide nucleoprotein's nuclear localization signals. Soon after a virion infects a new cell, M1 dissociates from the RNP under acidification of the virion driven by M2 protein. Dissociation of M1 from RNP unmasks nucleoprotein's nuclear localization signals, targeting the RNP to the nucleus. The protein is Nucleoprotein of Influenza A virus (strain A/China:Nanchang/11/1996 H1N1).